We begin with the raw amino-acid sequence, 448 residues long: MAKKPIYKSLYFQVIVAIIAGILVGHFYPSTTHVVDGVKEHIPGLGEQLKPLGDAFIRLIKMIIAPVIFCTVVSGIAGMESMKSVGKTGGVALLYFEVVSTIALLIGLLVINIAKPGVGMNVDPASLDTSGIAKYVASGQSQSTIEFLMHIIPETVVGAFANGEILQVLLFAIMFGFALHKLGDAGRPVLKFIDQISHVFFNIVNMIMKLAPIGAFGAMAFTIGKYGVGSLVQLGQLIICFYVTCLLFIFIVLGTISRICGFSILKMIRLIREELLIVLGTSSSESVLPRMLRKLEIAGCEKSVVGLVIPTGYSFNLDGTSIYLTMAAIFIAQATNTQLDVQHQITLLLVLLISSKGAAGVTGSGFIVMAATLSAVGHIPVAGLALILGIDRFMSEARALTNLTGNTLATIAVAKWVGALDKEKLDEALNNPAEVDRKMLEADRPAHA.

A run of 9 helical transmembrane segments spans residues 9 to 29 (SLYF…HFYP), 59 to 79 (LIKM…IAGM), 91 to 111 (VALL…LLVI), 159 to 179 (AFAN…GFAL), 203 to 223 (IVNM…AFTI), 237 to 257 (LIIC…GTIS), 312 to 332 (GYSF…IFIA), 345 to 365 (ITLL…TGSG), and 367 to 387 (IVMA…LALI).

Belongs to the dicarboxylate/amino acid:cation symporter (DAACS) (TC 2.A.23) family.

The protein resides in the cell inner membrane. Functionally, responsible for the transport of dicarboxylates such as succinate, fumarate, and malate from the periplasm across the membrane. This is C4-dicarboxylate transport protein from Acinetobacter baylyi (strain ATCC 33305 / BD413 / ADP1).